Consider the following 215-residue polypeptide: Outer membrane protein assembly factor BamC homolog (215 aa).

Residues 1–16 (MKKIILNLVTAIILAG) form the signal peptide. Cys-17 carries N-palmitoyl cysteine lipidation. A lipid anchor (S-diacylglycerol cysteine) is attached at Cys-17.

Belongs to the BamC family.

It localises to the cell outer membrane. This chain is Outer membrane protein assembly factor BamC homolog, found in Haemophilus influenzae (strain ATCC 51907 / DSM 11121 / KW20 / Rd).